Reading from the N-terminus, the 364-residue chain is tRNA 2-selenouridine synthase (364 aa).

One can recognise a Rhodanese domain in the interval 14–137 (LLADTPLIDV…LRQTAIQATW (124 aa)). Cysteine 97 acts as the S-selanylcysteine intermediate in catalysis.

It belongs to the SelU family. In terms of assembly, monomer.

The catalysed reaction is 5-methylaminomethyl-2-thiouridine(34) in tRNA + selenophosphate + (2E)-geranyl diphosphate + H2O + H(+) = 5-methylaminomethyl-2-selenouridine(34) in tRNA + (2E)-thiogeraniol + phosphate + diphosphate. It catalyses the reaction 5-methylaminomethyl-2-thiouridine(34) in tRNA + (2E)-geranyl diphosphate = 5-methylaminomethyl-S-(2E)-geranyl-thiouridine(34) in tRNA + diphosphate. The enzyme catalyses 5-methylaminomethyl-S-(2E)-geranyl-thiouridine(34) in tRNA + selenophosphate + H(+) = 5-methylaminomethyl-2-(Se-phospho)selenouridine(34) in tRNA + (2E)-thiogeraniol. It carries out the reaction 5-methylaminomethyl-2-(Se-phospho)selenouridine(34) in tRNA + H2O = 5-methylaminomethyl-2-selenouridine(34) in tRNA + phosphate. Its function is as follows. Involved in the post-transcriptional modification of the uridine at the wobble position (U34) of tRNA(Lys), tRNA(Glu) and tRNA(Gln). Catalyzes the conversion of 2-thiouridine (S2U-RNA) to 2-selenouridine (Se2U-RNA). Acts in a two-step process involving geranylation of 2-thiouridine (S2U) to S-geranyl-2-thiouridine (geS2U) and subsequent selenation of the latter derivative to 2-selenouridine (Se2U) in the tRNA chain. The chain is tRNA 2-selenouridine synthase from Salmonella enteritidis.